Here is a 307-residue protein sequence, read N- to C-terminus: MAEITAAAVKALRERTGAGMMDCKKALNEANGEMEAAVDWLRAKGLAAAAKKSGRQAAEGLVGVMIDGTKGAVLEVNSETDFVAKNEKFQDFVKGVTALVLEHGSDIDTLSKAPHPAGGSVNDVLTANIATIGENQALRRAALLEVENGVVVPYIHNQVAPGVGKIGVLVALESEAPSDFLESLGKQIAMHVAAATPLALDEDSLDDAAVERERAIAQEKAAESGKPAEIVTRMVEGAVAKYRKENALLSQIFVVDGKTRVSDVVSKAAKETGKPITLKQFVRFQLGEGIEKQETDFAAEVAAAAGV.

The involved in Mg(2+) ion dislocation from EF-Tu stretch occupies residues 80–83 (TDFV).

This sequence belongs to the EF-Ts family.

The protein localises to the cytoplasm. In terms of biological role, associates with the EF-Tu.GDP complex and induces the exchange of GDP to GTP. It remains bound to the aminoacyl-tRNA.EF-Tu.GTP complex up to the GTP hydrolysis stage on the ribosome. The polypeptide is Elongation factor Ts (tsf) (Zymomonas mobilis subsp. mobilis (strain ATCC 31821 / ZM4 / CP4)).